We begin with the raw amino-acid sequence, 132 residues long: Fatty acid-binding protein, brain (132 aa).

Valine 2 carries the post-translational modification N-acetylvaline. A fatty acid is bound at residue 127–129; the sequence is RHY.

This sequence belongs to the calycin superfamily. Fatty-acid binding protein (FABP) family.

The protein resides in the cytoplasm. FABPs are thought to play a role in the intracellular transport of long-chain fatty acids and their acyl-CoA esters. This is Fatty acid-binding protein, brain (FABP7) from Gallus gallus (Chicken).